The chain runs to 278 residues: MSAVIRVDSLNKTFARKQALFNLKLEIQAGEMVALIGASGSGKSTLLRHVAGLARCDRDNGGSIDVLGRRLQASGRLSGEVRRLRADIGYIFQQFNLVNRLSVLDNVLLGFLGRMPRWRGSLGLFSAEQKRQALEALARVGLADFAGQRASTLSGGQQQRVAIARALTQKAEVILADEPIASLDPESARKVMDILADINRHDGKTVVVTLHQVDYALRYCPRAVALKGGRILFDGSSEHLSEGFLNELYGAEGDTPLLFSDRARRGAESQPELTLARA.

Positions 5-253 (IRVDSLNKTF…FLNELYGAEG (249 aa)) constitute an ABC transporter domain. An ATP-binding site is contributed by 37-44 (GASGSGKS).

The protein belongs to the ABC transporter superfamily. Phosphonates importer (TC 3.A.1.9.1) family. In terms of assembly, the complex is composed of two ATP-binding proteins (PhnC), two transmembrane proteins (PhnE) and a solute-binding protein (PhnD).

Its subcellular location is the cell inner membrane. The catalysed reaction is phosphonate(out) + ATP + H2O = phosphonate(in) + ADP + phosphate + H(+). Its function is as follows. Part of the ABC transporter complex PhnCDE involved in phosphonates import. Responsible for energy coupling to the transport system. This chain is Phosphonates import ATP-binding protein PhnC 1, found in Pseudomonas aeruginosa (strain UCBPP-PA14).